Consider the following 485-residue polypeptide: Glutamyl-tRNA(Gln) amidotransferase subunit A (485 aa).

Active-site charge relay system residues include Lys-80 and Ser-155. Ser-179 functions as the Acyl-ester intermediate in the catalytic mechanism.

This sequence belongs to the amidase family. GatA subfamily. As to quaternary structure, heterotrimer of A, B and C subunits.

It catalyses the reaction L-glutamyl-tRNA(Gln) + L-glutamine + ATP + H2O = L-glutaminyl-tRNA(Gln) + L-glutamate + ADP + phosphate + H(+). Its function is as follows. Allows the formation of correctly charged Gln-tRNA(Gln) through the transamidation of misacylated Glu-tRNA(Gln) in organisms which lack glutaminyl-tRNA synthetase. The reaction takes place in the presence of glutamine and ATP through an activated gamma-phospho-Glu-tRNA(Gln). This chain is Glutamyl-tRNA(Gln) amidotransferase subunit A, found in Endomicrobium trichonymphae.